Reading from the N-terminus, the 347-residue chain is Heat-inducible transcription repressor HrcA (347 aa).

Belongs to the HrcA family.

Negative regulator of class I heat shock genes (grpE-dnaK-dnaJ and groELS operons). Prevents heat-shock induction of these operons. The chain is Heat-inducible transcription repressor HrcA from Rhodococcus erythropolis (strain PR4 / NBRC 100887).